The sequence spans 313 residues: Carbamate kinase 2 (313 aa).

This sequence belongs to the carbamate kinase family.

The protein localises to the cytoplasm. The enzyme catalyses hydrogencarbonate + NH4(+) + ATP = carbamoyl phosphate + ADP + H2O + H(+). Its pathway is metabolic intermediate metabolism; carbamoyl phosphate degradation; CO(2) and NH(3) from carbamoyl phosphate: step 1/1. The sequence is that of Carbamate kinase 2 (arcC2) from Staphylococcus aureus (strain MRSA252).